The chain runs to 113 residues: uncharacterized protein (113 aa).

The tract at residues 66–85 (WSTPTTSSNTQNTQSSSDSY) is disordered. The span at 67–85 (STPTTSSNTQNTQSSSDSY) shows a compositional bias: low complexity.

This is an uncharacterized protein from Escherichia coli (Bacteriophage T4).